A 494-amino-acid chain; its full sequence is Ribose import ATP-binding protein RbsA (494 aa).

2 ABC transporter domains span residues 3 to 240 (IEMK…VGRS) and 250 to 494 (SQIS…TGGE). Residue 35–42 (GENGAGKS) participates in ATP binding.

Belongs to the ABC transporter superfamily. Ribose importer (TC 3.A.1.2.1) family. In terms of assembly, the complex is composed of an ATP-binding protein (RbsA), two transmembrane proteins (RbsC) and a solute-binding protein (RbsB).

The protein resides in the cell membrane. The enzyme catalyses D-ribose(out) + ATP + H2O = D-ribose(in) + ADP + phosphate + H(+). Functionally, part of the ABC transporter complex RbsABC involved in ribose import. Responsible for energy coupling to the transport system. The chain is Ribose import ATP-binding protein RbsA from Bacillus cereus (strain ZK / E33L).